The primary structure comprises 81 residues: ATP synthase subunit c, chloroplastic (81 aa).

Transmembrane regions (helical) follow at residues 3-23 (PLIS…ASIG) and 57-77 (LAFM…LLFA).

Belongs to the ATPase C chain family. F-type ATPases have 2 components, F(1) - the catalytic core - and F(0) - the membrane proton channel. F(1) has five subunits: alpha(3), beta(3), gamma(1), delta(1), epsilon(1). F(0) has four main subunits: a(1), b(1), b'(1) and c(10-14). The alpha and beta chains form an alternating ring which encloses part of the gamma chain. F(1) is attached to F(0) by a central stalk formed by the gamma and epsilon chains, while a peripheral stalk is formed by the delta, b and b' chains.

It is found in the plastid. It localises to the chloroplast thylakoid membrane. Its function is as follows. F(1)F(0) ATP synthase produces ATP from ADP in the presence of a proton or sodium gradient. F-type ATPases consist of two structural domains, F(1) containing the extramembraneous catalytic core and F(0) containing the membrane proton channel, linked together by a central stalk and a peripheral stalk. During catalysis, ATP synthesis in the catalytic domain of F(1) is coupled via a rotary mechanism of the central stalk subunits to proton translocation. Key component of the F(0) channel; it plays a direct role in translocation across the membrane. A homomeric c-ring of between 10-14 subunits forms the central stalk rotor element with the F(1) delta and epsilon subunits. This is ATP synthase subunit c, chloroplastic from Gossypium barbadense (Sea Island cotton).